The primary structure comprises 70 residues: Exodeoxyribonuclease 7 small subunit (70 aa).

The protein belongs to the XseB family. Heterooligomer composed of large and small subunits.

It is found in the cytoplasm. It carries out the reaction Exonucleolytic cleavage in either 5'- to 3'- or 3'- to 5'-direction to yield nucleoside 5'-phosphates.. Functionally, bidirectionally degrades single-stranded DNA into large acid-insoluble oligonucleotides, which are then degraded further into small acid-soluble oligonucleotides. In Streptococcus gordonii (strain Challis / ATCC 35105 / BCRC 15272 / CH1 / DL1 / V288), this protein is Exodeoxyribonuclease 7 small subunit.